The following is a 147-amino-acid chain: D-aminoacyl-tRNA deacylase (147 aa).

The Gly-cisPro motif, important for rejection of L-amino acids motif lies at 137 to 138; it reads GP.

Belongs to the DTD family. As to quaternary structure, homodimer.

The protein resides in the cytoplasm. It carries out the reaction glycyl-tRNA(Ala) + H2O = tRNA(Ala) + glycine + H(+). The catalysed reaction is a D-aminoacyl-tRNA + H2O = a tRNA + a D-alpha-amino acid + H(+). Its function is as follows. An aminoacyl-tRNA editing enzyme that deacylates mischarged D-aminoacyl-tRNAs. Also deacylates mischarged glycyl-tRNA(Ala), protecting cells against glycine mischarging by AlaRS. Acts via tRNA-based rather than protein-based catalysis; rejects L-amino acids rather than detecting D-amino acids in the active site. By recycling D-aminoacyl-tRNA to D-amino acids and free tRNA molecules, this enzyme counteracts the toxicity associated with the formation of D-aminoacyl-tRNA entities in vivo and helps enforce protein L-homochirality. The protein is D-aminoacyl-tRNA deacylase of Levilactobacillus brevis (strain ATCC 367 / BCRC 12310 / CIP 105137 / JCM 1170 / LMG 11437 / NCIMB 947 / NCTC 947) (Lactobacillus brevis).